We begin with the raw amino-acid sequence, 141 residues long: Nucleoside diphosphate kinase (141 aa).

ATP-binding residues include Lys11, Phe59, Arg87, Thr93, Arg104, and Asn114. The Pros-phosphohistidine intermediate role is filled by His117.

The protein belongs to the NDK family. Homotetramer. Mg(2+) serves as cofactor.

Its subcellular location is the cytoplasm. The catalysed reaction is a 2'-deoxyribonucleoside 5'-diphosphate + ATP = a 2'-deoxyribonucleoside 5'-triphosphate + ADP. The enzyme catalyses a ribonucleoside 5'-diphosphate + ATP = a ribonucleoside 5'-triphosphate + ADP. Major role in the synthesis of nucleoside triphosphates other than ATP. The ATP gamma phosphate is transferred to the NDP beta phosphate via a ping-pong mechanism, using a phosphorylated active-site intermediate. This Cupriavidus metallidurans (strain ATCC 43123 / DSM 2839 / NBRC 102507 / CH34) (Ralstonia metallidurans) protein is Nucleoside diphosphate kinase.